Here is a 394-residue protein sequence, read N- to C-terminus: Proliferation-associated protein 2G4 (394 aa).

At Ser-2 the chain carries N-acetylserine. Position 2 is a phosphoserine (Ser-2). The interval 2 to 48 is necessary for nucleolar localization; sequence SGEDEQQEQTIAEDLVVTKYKMGGDIANRVLRSLVEASSSGVSVLSL. An RNA-binding region spans residues 46 to 54; sequence LSLCEKGDA. Lys-298 participates in a covalent cross-link: Glycyl lysine isopeptide (Lys-Gly) (interchain with G-Cter in SUMO2). A necessary for nucleolar localization region spans residues 301–394; it reads LLQPFNVLYE…ETLEENEAGD (94 aa). The residue at position 335 (Ser-335) is a Phosphoserine. The disordered stretch occupies residues 358 to 394; sequence LQSSASRKTQKKKKKKASKTAENATSGETLEENEAGD. At Ser-361 the chain carries Phosphoserine; by PKC/PRKCD. The interval 361-375 is interaction with RNA; the sequence is SASRKTQKKKKKKAS. Basic residues predominate over residues 365-375; the sequence is KTQKKKKKKAS. 2 positions are modified to phosphothreonine: Thr-366 and Thr-386.

Belongs to the peptidase M24 family. As to quaternary structure, isoform 2 interacts with the cytoplasmic domain of non-phosphorylated ERBB3; the interaction requires PKC activity. Interacts with AR. Treatment with HRG leads to dissociation from ERBB3 and increases association with AR. Interacts with NCL/nucleolin. Component of a ribonucleoprotein complex containing at least PA2G4, NCL, TOP1, PABPC2, RPLP0, acetylated histone H1 (HIST1H1A or H1F1), histone H1 2/4, RPL4, RPL8, RPL15, RPL18, RPL18A, RPL21, RPL11, RPL12, RPL28, RPL27, RPLP2 and RPL24. Interacts with HDAC2. Interacts with RB1; the interaction is enhanced upon PA2G4 dephosphorylation. Interacts with AKT1. Isoform 1 and isoform 2 interact with RNF20. Isoform 2 interacts with HUWE1. Interacts with DNAJC21. Post-translationally, phosphorylated on serine and threonine residues. Phosphorylation is enhanced by HRG treatment. Basal phosphorylation is PKC-dependent and HRG-induced phosphorylation is predominantly PKC-independent. Phosphorylation at Ser-361 by PKC/PRKCD regulates its nucleolar localization. In terms of processing, in cancer cells, isoform 2 is polyubiquitinated leading to its proteasomal degradation and phosphorylation by PKC/PRKCD enhances polyubiquitination. Isoform 2 is undetectable whereas isoform 1 is strongly expressed in cancer cells (at protein level). Isoform 1 and isoform 2 are widely expressed, including heart, brain, lung, pancreas, skeletal muscle, kidney, placenta and liver.

It localises to the cytoplasm. The protein localises to the nucleus. It is found in the nucleolus. May play a role in a ERBB3-regulated signal transduction pathway. Seems be involved in growth regulation. Acts a corepressor of the androgen receptor (AR) and is regulated by the ERBB3 ligand neuregulin-1/heregulin (HRG). Inhibits transcription of some E2F1-regulated promoters, probably by recruiting histone acetylase (HAT) activity. Binds RNA. Associates with 28S, 18S and 5.8S mature rRNAs, several rRNA precursors and probably U3 small nucleolar RNA. May be involved in regulation of intermediate and late steps of rRNA processing. May be involved in ribosome assembly. Mediates cap-independent translation of specific viral IRESs (internal ribosomal entry site). Regulates cell proliferation, differentiation, and survival. Isoform 1 suppresses apoptosis whereas isoform 2 promotes cell differentiation. This Homo sapiens (Human) protein is Proliferation-associated protein 2G4 (PA2G4).